The chain runs to 518 residues: GMP synthase [glutamine-hydrolyzing] (518 aa).

The Glutamine amidotransferase type-1 domain occupies 6-200 (RLLIIDFGSQ…FVRLAGFKGD (195 aa)). The Nucleophile role is filled by Cys-84. Catalysis depends on residues His-175 and Glu-177. The 193-residue stretch at 201-393 (WTMGAYREEA…LGLPESFIGR (193 aa)) folds into the GMPS ATP-PPase domain. 228-234 (SGGVDSS) contributes to the ATP binding site.

As to quaternary structure, homodimer.

The catalysed reaction is XMP + L-glutamine + ATP + H2O = GMP + L-glutamate + AMP + diphosphate + 2 H(+). It functions in the pathway purine metabolism; GMP biosynthesis; GMP from XMP (L-Gln route): step 1/1. Functionally, catalyzes the synthesis of GMP from XMP. This Cereibacter sphaeroides (strain ATCC 17029 / ATH 2.4.9) (Rhodobacter sphaeroides) protein is GMP synthase [glutamine-hydrolyzing].